A 368-amino-acid polypeptide reads, in one-letter code: Flagellar P-ring protein (368 aa).

The first 22 residues, 1-22, serve as a signal peptide directing secretion; it reads MLIPLARAVLALALLGAGAAHA.

This sequence belongs to the FlgI family. As to quaternary structure, the basal body constitutes a major portion of the flagellar organelle and consists of four rings (L,P,S, and M) mounted on a central rod.

The protein resides in the periplasm. It is found in the bacterial flagellum basal body. Functionally, assembles around the rod to form the L-ring and probably protects the motor/basal body from shearing forces during rotation. The protein is Flagellar P-ring protein of Bordetella bronchiseptica (strain ATCC BAA-588 / NCTC 13252 / RB50) (Alcaligenes bronchisepticus).